The sequence spans 359 residues: 3-dehydroquinate synthase (359 aa).

Residues 70-75 (DGEQYK), 105-109 (GVIGD), 129-130 (TT), Lys142, Lys151, and 169-172 (FYKT) contribute to the NAD(+) site. Residues Glu184, His247, and His264 each contribute to the Zn(2+) site.

The protein belongs to the sugar phosphate cyclases superfamily. Dehydroquinate synthase family. Co(2+) serves as cofactor. The cofactor is Zn(2+). NAD(+) is required as a cofactor.

The protein localises to the cytoplasm. It carries out the reaction 7-phospho-2-dehydro-3-deoxy-D-arabino-heptonate = 3-dehydroquinate + phosphate. It functions in the pathway metabolic intermediate biosynthesis; chorismate biosynthesis; chorismate from D-erythrose 4-phosphate and phosphoenolpyruvate: step 2/7. In terms of biological role, catalyzes the conversion of 3-deoxy-D-arabino-heptulosonate 7-phosphate (DAHP) to dehydroquinate (DHQ). The sequence is that of 3-dehydroquinate synthase from Francisella tularensis subsp. holarctica (strain FTNF002-00 / FTA).